A 187-amino-acid polypeptide reads, in one-letter code: Calcium and integrin-binding family member 3 (187 aa).

3 consecutive EF-hand domains span residues 66 to 101 (KDNP…MSEM), 103 to 138 (PRDL…LTRG), and 144 to 179 (EVSL…APDF). Positions 116, 118, 120, 122, 127, 157, 159, 161, 163, and 168 each coordinate Ca(2+).

As to quaternary structure, monomer and homodimer. Interacts with ITGA2B (via C-terminus cytoplasmic tail region); the interaction is stabilized/increased in a calcium and magnesium-dependent manner. Interacts with TMC1.

In terms of biological role, acts a an auxiliary subunit of the sensory mechanoelectrical transduction (MET) channel in hair cells. Plays a role in regulating hair cell MET channel localization and function. In Homo sapiens (Human), this protein is Calcium and integrin-binding family member 3 (CIB3).